A 352-amino-acid chain; its full sequence is C-X-C chemokine receptor type 4 (352 aa).

The interval 1-21 (MEGISIYTSDNYTEEMGSGDY) is important for chemokine binding and signaling. Residues 1–38 (MEGISIYTSDNYTEEMGSGDYDSIKEPCFREENAHFNR) lie on the Extracellular side of the membrane. Y7 carries the post-translational modification Sulfotyrosine. An N-linked (GlcNAc...) asparagine glycan is attached at N11. Y12 is modified (sulfotyrosine). S18 carries O-linked (Xyl...) (chondroitin sulfate) serine glycosylation. The residue at position 21 (Y21) is a Sulfotyrosine. Disulfide bonds link C28–C274 and C109–C186. A helical transmembrane segment spans residues 39–63 (IFLPTIYSIIFLTGIVGNGLVILVM). Over 64–77 (GYQKKLRSMTDKYR) the chain is Cytoplasmic. A helical transmembrane segment spans residues 78-99 (LHLSVADLLFVITLPFWAVDAV). A chemokine binding region spans residues 94–97 (WAVD). Residues 100–110 (ANWYFGNFLCK) are Extracellular-facing. The chain crosses the membrane as a helical span at residues 111–130 (AVHVIYTVNLYSSVLILAFI). Positions 113-117 (HVIYT) are chemokine binding. The Cytoplasmic segment spans residues 131–154 (SLDRYLAIVHATNSQRPRKLLAEK). Residues 133–135 (DRY) carry the Important for signaling motif. Positions 135–147 (YLAIVHATNSQRP) are involved in dimerization; when bound to chemokine. Residues 155–174 (VVYVGVWIPALLLTIPDFIF) traverse the membrane as a helical segment. Over 175 to 195 (ASVSEADDRYICDRFYPNDLW) the chain is Extracellular. The segment at 186–190 (CDRFY) is chemokine binding, important for signaling. The involved in dimerization stretch occupies residues 191–210 (PNDLWVVVFQFQHIMVGLIL). Residues 196-216 (VVVFQFQHIMVGLILPGIVIL) traverse the membrane as a helical segment. Residues 217–241 (SCYCIIISKLSHSKGHQKRKALKTT) are Cytoplasmic-facing. The helical transmembrane segment at 242–261 (VILILAFFACWLPYYIGISI) threads the bilayer. Residues 262–282 (DSFILLEIIKQGCEFENTVHK) lie on the Extracellular side of the membrane. Residues 266–268 (LLE) are involved in dimerization. Residues 283-302 (WISITEALAFFHCCLNPILY) form a helical membrane-spanning segment. Residues 303 to 352 (AFLGAKFKTSAQHALTSVSRGSSLKILSKGKRGGHSSVSTESESSSFHSS) are Cytoplasmic-facing. Phosphoserine occurs at positions 319 and 321. S324 and S325 each carry phosphoserine; by PKC and GRK6. Residues 329–352 (LSKGKRGGHSSVSTESESSSFHSS) form a disordered region. S330 carries the post-translational modification Phosphoserine; by GRK6. Residue K331 forms a Glycyl lysine isopeptide (Lys-Gly) (interchain with G-Cter in ubiquitin) linkage. Positions 337–352 (HSSVSTESESSSFHSS) are enriched in low complexity. S339 is subject to Phosphoserine; by GRK6. Phosphoserine is present on residues S348 and S351.

Belongs to the G-protein coupled receptor 1 family. Monomer. Can form homodimers. Interacts with CD164. Interacts with ARRB2; the interaction is dependent on the C-terminal phosphorylation of CXCR4 and allows activation of MAPK1 and MAPK3. Interacts with ARR3; the interaction is dependent on the C-terminal phosphorylation of CXCR4 and modulates calcium mobilization. Interacts with RNF113A; the interaction, enhanced by CXCL12, promotes CXCR4 ubiquitination and subsequent degradation. Interacts (via the cytoplasmic C-terminal) with ITCH (via the WW domains I and II); the interaction, enhanced by CXCL12, promotes CXCR4 ubiquitination and leads to its degradation. Interacts with extracellular ubiquitin. Interacts with DBN1; this interaction is enhanced by antigenic stimulation. Following LPS binding, may form a complex with GDF5, HSP90AA1 and HSPA8. Post-translationally, phosphorylated on agonist stimulation. Rapidly phosphorylated on serine and threonine residues in the C-terminal. Phosphorylation at Ser-324 and Ser-325 leads to recruitment of ITCH, ubiquitination and protein degradation. In terms of processing, ubiquitinated after ligand binding, leading to its degradation. Ubiquitinated by ITCH at the cell membrane on agonist stimulation. The ubiquitin-dependent mechanism, endosomal sorting complex required for transport (ESCRT), then targets CXCR4 for lysosomal degradation. This process is dependent also on prior Ser-/Thr-phosphorylation in the C-terminal of CXCR4. Also binding of ARRB1 to STAM negatively regulates CXCR4 sorting to lysosomes though modulating ubiquitination of SFR5S. Sulfation is required for efficient binding of CXCL12/SDF-1alpha and promotes its dimerization. Post-translationally, O- and N-glycosylated. N-glycosylation can mask coreceptor function. The O-glycosylation chondroitin sulfate attachment does not affect interaction with CXCL12/SDF-1alpha nor its coreceptor activity.

The protein resides in the cell membrane. It is found in the cell junction. The protein localises to the early endosome. Its subcellular location is the late endosome. It localises to the lysosome. In terms of biological role, receptor for the C-X-C chemokine CXCL12/SDF-1 that transduces a signal by increasing intracellular calcium ion levels and enhancing MAPK1/MAPK3 activation. Involved in the AKT signaling cascade. Plays a role in regulation of cell migration, e.g. during wound healing. Acts as a receptor for extracellular ubiquitin; leading to enhanced intracellular calcium ions and reduced cellular cAMP levels. Binds bacterial lipopolysaccharide (LPS) et mediates LPS-induced inflammatory response, including TNF secretion by monocytes. Involved in hematopoiesis and in cardiac ventricular septum formation. Also plays an essential role in vascularization of the gastrointestinal tract, probably by regulating vascular branching and/or remodeling processes in endothelial cells. Involved in cerebellar development. In the CNS, could mediate hippocampal-neuron survival. The sequence is that of C-X-C chemokine receptor type 4 (CXCR4) from Papio anubis (Olive baboon).